A 321-amino-acid chain; its full sequence is Torsin-2A (321 aa).

An N-terminal signal peptide occupies residues 1-27; the sequence is MAVARHGCPPWGSILGLLVLALAAAAA. ATP is bound at residue 93–100; sequence GWTGTGKS. The N-linked (GlcNAc...) asparagine glycan is linked to asparagine 149.

This sequence belongs to the ClpA/ClpB family. Torsin subfamily. As to quaternary structure, homohexamer. Interacts with TOR1AIP1.

It is found in the endoplasmic reticulum lumen. The chain is Torsin-2A (Tor2a) from Rattus norvegicus (Rat).